The primary structure comprises 122 residues: Small ribosomal subunit protein bS16 (122 aa).

The tract at residues 87 to 122 is disordered; sequence VGKAKQAEARKAGAKNVAKQAAEAKAEETPADNTEA.

The protein belongs to the bacterial ribosomal protein bS16 family.

In Prochlorococcus marinus (strain MIT 9303), this protein is Small ribosomal subunit protein bS16.